The following is a 406-amino-acid chain: Cytochrome P450 165C4 (406 aa).

Cysteine 356 contributes to the heme binding site.

This sequence belongs to the cytochrome P450 family. Heme serves as cofactor.

The protein operates within antibiotic biosynthesis; vancomycin biosynthesis. In terms of biological role, involved in the coupling of aromatic side chains of the heptapeptide of vancomycin. The protein is Cytochrome P450 165C4 (cyp165C4) of Amycolatopsis orientalis (Nocardia orientalis).